Consider the following 145-residue polypeptide: MSTPFWQSKTLQEMTEQEWESLCDGCGKCCLHKLMDEETDEVFYTNVACSWLNSKTCSCKDYPNRFSSGENCLKLTQDKIAEFHWLPRTCAYRRLSENQPLPEWHPLITGSKSAMHAAGQSIRNRVVYEIDVKDWEDHVIENPDY.

This sequence belongs to the UPF0260 family.

The chain is UPF0260 protein VV2402 from Vibrio vulnificus (strain YJ016).